The following is a 130-amino-acid chain: Small ribosomal subunit protein uS8 (130 aa).

Belongs to the universal ribosomal protein uS8 family. In terms of assembly, part of the 30S ribosomal subunit.

Functionally, one of the primary rRNA binding proteins, it binds directly to 16S rRNA central domain where it helps coordinate assembly of the platform of the 30S subunit. The protein is Small ribosomal subunit protein uS8 of Methanococcus maripaludis (strain C6 / ATCC BAA-1332).